We begin with the raw amino-acid sequence, 179 residues long: ATP-dependent protease subunit HslV (179 aa).

The active site involves threonine 7. Glycine 162, cysteine 165, and threonine 168 together coordinate Na(+).

It belongs to the peptidase T1B family. HslV subfamily. A double ring-shaped homohexamer of HslV is capped on each side by a ring-shaped HslU homohexamer. The assembly of the HslU/HslV complex is dependent on binding of ATP.

The protein resides in the cytoplasm. The enzyme catalyses ATP-dependent cleavage of peptide bonds with broad specificity.. Its activity is regulated as follows. Allosterically activated by HslU binding. Protease subunit of a proteasome-like degradation complex believed to be a general protein degrading machinery. This Teredinibacter turnerae (strain ATCC 39867 / T7901) protein is ATP-dependent protease subunit HslV.